The following is a 180-amino-acid chain: uncharacterized protein (180 aa).

The protein belongs to the isochorismatase family.

This is an uncharacterized protein from Bacillus subtilis (strain 168).